The sequence spans 620 residues: MSPEALSELISSIAHNLVAAGQAGALTDELIPPVDKLAVMRPKDRAHGDWASNIAMQLAKKAGMKPRDLAEPFAAALAEADGIAKVEVAGPGFINITLDSASAAAVVDTVLAAGAMTDTDKHLNKVNEYGRNAHLGGQTLNLEFVSANPTGPIHIGGTRWAAVGDAMARVLEANGAKVVREYYFNDHGEQINRFAKSLVAAWAEANNLGEAGYQTETPCDGYKGAYINEIAARVQAEAESDGVDLTALAHQDQGLNDDGEPLGEADTEVREEFRKRAVPMMFDEIQKSMKDFRVNFDVWFHENSLYADGKVDAAIEELKSRGDIFDKDGATWFESTKHGDDKDRVIIKSNGEFAYFAADIAYYWDKRHRAENPADVAIYMLGADHHGYIGRMMAMCAAFGDEPGKNMQILIGQLVNVMKDGKPVRMSKRAGNVVTIDDLVSVVGVDAARYSLARSDYNQNFDIDLALLASHTNDNPVYYVQYAHARSKNVDRNAAVAGISYEGADLALLDTEADGEVLAALAQFPSVLATAADDRQPHKVARYLEELAATYHKWYNVERVVPMALTDPETRGDDEARKALEIAKNPEPARAAARLKLNDAVQQVIANGLDLLGVTAPEKM.

Residues 147 to 157 (ANPTGPIHIGG) carry the 'HIGH' region motif.

This sequence belongs to the class-I aminoacyl-tRNA synthetase family. Monomer.

It is found in the cytoplasm. It carries out the reaction tRNA(Arg) + L-arginine + ATP = L-arginyl-tRNA(Arg) + AMP + diphosphate. In Bifidobacterium longum (strain DJO10A), this protein is Arginine--tRNA ligase.